We begin with the raw amino-acid sequence, 331 residues long: Olfactory receptor 6K3 (331 aa).

The Extracellular portion of the chain corresponds to 1-41 (MCWTMPSPFTGSSTRNMESGNQSTVTEFIFTGFPQLQDGSL). A glycan (N-linked (GlcNAc...) asparagine) is linked at Asn21. Residues 42–62 (LYFFPLLFIYTFIIIDNLLIF) traverse the membrane as a helical segment. Residues 63-70 (SAVRLDTH) lie on the Cytoplasmic side of the membrane. The chain crosses the membrane as a helical span at residues 71 to 91 (LHNPMYNFISIFSFLEIWYTT). Topologically, residues 92-115 (ATIPKMLSNLISEKKAISMTGCIL) are extracellular. Cys113 and Cys205 are disulfide-bonded. The chain crosses the membrane as a helical span at residues 116–136 (QMYFFHSLENSEGILLTTMAI). Topologically, residues 137-155 (DRYVAICNPLRYQMIMTPR) are cytoplasmic. A helical transmembrane segment spans residues 156–176 (LCAQLSAGSCLFGFLILLPEI). Residues 177 to 212 (VMISTLPFCGPNQIHQIFCDLVPVLSLACTDTSMIL) lie on the Extracellular side of the membrane. Residues 213–232 (IEDVIHAVTIIITFLIIALS) traverse the membrane as a helical segment. At 233-252 (YVRIVTVILRIPSSEGRQKA) the chain is on the cytoplasmic side. The helical transmembrane segment at 253 to 273 (FSTCAGHLMVFPIFFGSVSLM) threads the bilayer. Over 274 to 286 (YLRFSDTYPPVLD) the chain is Extracellular. Residues 287 to 307 (TAIALMFTVLAPFFNPIIYSL) traverse the membrane as a helical segment. The Cytoplasmic portion of the chain corresponds to 308–331 (RNKDMNNAIKKLFCLQKVLNKPGG).

This sequence belongs to the G-protein coupled receptor 1 family.

Its subcellular location is the cell membrane. Its function is as follows. Odorant receptor. This Homo sapiens (Human) protein is Olfactory receptor 6K3 (OR6K3).